A 66-amino-acid polypeptide reads, in one-letter code: Large ribosomal subunit protein uL29 (66 aa).

It belongs to the universal ribosomal protein uL29 family.

The protein is Large ribosomal subunit protein uL29 of Bacillus licheniformis (strain ATCC 14580 / DSM 13 / JCM 2505 / CCUG 7422 / NBRC 12200 / NCIMB 9375 / NCTC 10341 / NRRL NRS-1264 / Gibson 46).